The following is a 100-amino-acid chain: Ubiquitin-related modifier 1 (100 aa).

G100 is modified (1-thioglycine). A Glycyl lysine isopeptide (Gly-Lys) (interchain with K-? in acceptor proteins) cross-link involves residue G100.

This sequence belongs to the URM1 family. In terms of processing, C-terminal thiocarboxylation occurs in 2 steps, it is first acyl-adenylated (-COAMP) via the hesA/moeB/thiF part of UBA4, then thiocarboxylated (-COSH) via the rhodanese domain of UBA4.

It localises to the cytoplasm. Its pathway is tRNA modification; 5-methoxycarbonylmethyl-2-thiouridine-tRNA biosynthesis. Functionally, acts as a sulfur carrier required for 2-thiolation of mcm(5)S(2)U at tRNA wobble positions of cytosolic tRNA(Lys), tRNA(Glu) and tRNA(Gln). Serves as sulfur donor in tRNA 2-thiolation reaction by being thiocarboxylated (-COSH) at its C-terminus by the MOCS3 homolog UBA4. The sulfur is then transferred to tRNA to form 2-thiolation of mcm(5)S(2)U. Prior mcm(5) tRNA modification by the elongator complex is required for 2-thiolation. Also acts as a ubiquitin-like protein (UBL) that is covalently conjugated via an isopeptide bond to lysine residues of target proteins such as AHP1. The thiocarboxylated form serves as substrate for conjugation and oxidative stress specifically induces the formation of UBL-protein conjugates. In Eremothecium gossypii (strain ATCC 10895 / CBS 109.51 / FGSC 9923 / NRRL Y-1056) (Yeast), this protein is Ubiquitin-related modifier 1.